An 89-amino-acid polypeptide reads, in one-letter code: Large ribosomal subunit protein eL34 (89 aa).

Positions 45–71 are disordered; it reads GIPRGRPVEMRKLPKTKKRPERPMPHL.

Belongs to the eukaryotic ribosomal protein eL34 family. In terms of assembly, part of the 50S ribosomal subunit.

The sequence is that of Large ribosomal subunit protein eL34 from Pyrococcus furiosus (strain ATCC 43587 / DSM 3638 / JCM 8422 / Vc1).